A 504-amino-acid chain; its full sequence is Dihydrolipoamide dehydrogenase (504 aa).

Residues Met1–Tyr34 constitute a mitochondrion transit peptide. FAD is bound by residues Glu69–Cys78, Lys87, Gly151, and Thr180–Ser182. Cys78 and Cys83 form a disulfide bridge. NAD(+)-binding positions include Gly217–Glu224, Glu240, Val275, and Gly310. FAD contacts are provided by residues Asp351 and Met357–His360. The active-site Proton acceptor is His483.

This sequence belongs to the class-I pyridine nucleotide-disulfide oxidoreductase family. As to quaternary structure, eukaryotic pyruvate dehydrogenase (PDH) complexes are organized as a core consisting of the oligomeric dihydrolipoamide acetyl-transferase (E2), around which are arranged multiple copies of pyruvate dehydrogenase (E1), dihydrolipoamide dehydrogenase (E3) and protein X (E3BP) bound by non-covalent bonds. The Chaetomium thermophilum PDH complex contains 60 E2 units, 12 E3BP units, about 20 E1 units, and 12 or more E3 units. The units are organized in 1 E2 60-mer, 4 E3BP trimers, about 20 E1 tetramers, and a maximum of 12 E3 dimers. The E3BP trimers are bound inside the icosahedral core with tetrahedral symmetry. Requires FAD as cofactor.

The protein resides in the mitochondrion. The enzyme catalyses N(6)-[(R)-dihydrolipoyl]-L-lysyl-[protein] + NAD(+) = N(6)-[(R)-lipoyl]-L-lysyl-[protein] + NADH + H(+). Its function is as follows. Lipoamide dehydrogenase is a component of the alpha-ketoacid dehydrogenase complexes. This includes the pyruvate dehydrogenase complex, which catalyzes the overall conversion of pyruvate to acetyl-CoA and CO(2). Also acts as a component of the glycine cleavage system (glycine decarboxylase complex), which catalyzes the degradation of glycine. The 10-megadalton pyruvate dehydrogenase complex contains multiple copies of three enzymatic components: pyruvate dehydrogenase (E1), dihydrolipoamide acetyltransferase (E2) and lipoamide dehydrogenase (E3) and catalyzes the overall oxidative decarboxylation of pyruvate to form acetyl-CoA and CO(2). Within the complex, pyruvate and thiamine pyrophosphate (TPP or vitamin B1) are bound by pyruvate dehydrogenase E1 subunits alpha and beta and pyruvate is decarboxylated leading to the 2-carbon hydrohyethyl bound to TPP. The E2 component contains covalently-bound lipoyl cofactors and transfers the hydroxyethyl group from TPP to an oxidized form of covalently bound lipoamide, and the resulting acetyl group is then transferred to free coenzyme A to form acetyl-CoA and reduced dihydrolipoamide-E2. Finally, the flavoprotein dihydrolipoamide dehydrogenase (E3) re-oxidizes the lipoyl group of dihydrolipoamide-E2 to form lipoamide-E2 and NADH. A fourth subunit, E3BP, is responsible for tethering E3 in proximity to the core, forming the entire metabolon. This Chaetomium thermophilum (strain DSM 1495 / CBS 144.50 / IMI 039719) (Thermochaetoides thermophila) protein is Dihydrolipoamide dehydrogenase.